The primary structure comprises 262 residues: Shikimate dehydrogenase (NADP(+)) (262 aa).

Shikimate contacts are provided by residues 15 to 17 (SRS) and T62. Residue K66 is the Proton acceptor of the active site. NADP(+) is bound at residue E78. Shikimate is bound by residues N87 and D102. NADP(+)-binding positions include 126–130 (GAGGA), 150–155 (NRTLAR), and M214. A shikimate-binding site is contributed by Y216. An NADP(+)-binding site is contributed by G236.

Belongs to the shikimate dehydrogenase family. In terms of assembly, homodimer.

It carries out the reaction shikimate + NADP(+) = 3-dehydroshikimate + NADPH + H(+). The protein operates within metabolic intermediate biosynthesis; chorismate biosynthesis; chorismate from D-erythrose 4-phosphate and phosphoenolpyruvate: step 4/7. Its function is as follows. Involved in the biosynthesis of the chorismate, which leads to the biosynthesis of aromatic amino acids. Catalyzes the reversible NADPH linked reduction of 3-dehydroshikimate (DHSA) to yield shikimate (SA). This is Shikimate dehydrogenase (NADP(+)) from Acinetobacter baumannii (strain ATCC 17978 / DSM 105126 / CIP 53.77 / LMG 1025 / NCDC KC755 / 5377).